The primary structure comprises 571 residues: Origin recognition complex subunit 5 (571 aa).

2 disordered regions span residues 90-142 and 404-430; these read DDEY…YDDD and QIYP…GRQL. Low complexity-rich tracts occupy residues 107–133 and 407–416; these read NNNN…NNND and PPQQVPQQQK. Over residues 417–428 the composition is skewed to basic and acidic residues; that stretch reads QQEKEKEKEKGR.

The protein belongs to the ORC1 family. ORC is composed of six subunits.

The protein resides in the nucleus. In terms of biological role, component of the origin recognition complex (ORC) that binds origins of replication. DNA-binding is ATP-dependent, however specific DNA sequences that define origins of replication have not been identified so far. ORC is required to assemble the pre-replication complex necessary to initiate DNA replication. The polypeptide is Origin recognition complex subunit 5 (orcE) (Dictyostelium discoideum (Social amoeba)).